The sequence spans 384 residues: S-adenosylmethionine synthase (384 aa).

His-15 is a binding site for ATP. Asp-17 contacts Mg(2+). Glu-43 lines the K(+) pocket. The L-methionine site is built by Glu-56 and Gln-99. The interval 99–109 is flexible loop; that stretch reads QSPDINQGVDR. ATP-binding positions include 164–166, 230–231, Asp-239, 245–246, Ala-262, and Lys-266; these read DAK, RF, and RK. Asp-239 provides a ligand contact to L-methionine. Lys-270 contributes to the L-methionine binding site.

The protein belongs to the AdoMet synthase family. In terms of assembly, homotetramer; dimer of dimers. Mg(2+) serves as cofactor. K(+) is required as a cofactor.

The protein localises to the cytoplasm. The enzyme catalyses L-methionine + ATP + H2O = S-adenosyl-L-methionine + phosphate + diphosphate. The protein operates within amino-acid biosynthesis; S-adenosyl-L-methionine biosynthesis; S-adenosyl-L-methionine from L-methionine: step 1/1. Its function is as follows. Catalyzes the formation of S-adenosylmethionine (AdoMet) from methionine and ATP. The overall synthetic reaction is composed of two sequential steps, AdoMet formation and the subsequent tripolyphosphate hydrolysis which occurs prior to release of AdoMet from the enzyme. This is S-adenosylmethionine synthase from Citrobacter koseri (strain ATCC BAA-895 / CDC 4225-83 / SGSC4696).